The chain runs to 180 residues: MSDSTTIARPYAKAIFEHALAEKKLSEWSEYLTLLAQVVLTPQATQFIANPASTDEQQIELLIEICGSKFKKNDALNNLIKLLTTNKRLMLLPEIKALYEVYRAEQEKILEVDVVSYSELTPAQQQRLSESLSQRLSRKVSLKISIDPSLLGGALIRAGDLVIDGSVRGKLNMLGTSLAA.

The protein belongs to the ATPase delta chain family. F-type ATPases have 2 components, F(1) - the catalytic core - and F(0) - the membrane proton channel. F(1) has five subunits: alpha(3), beta(3), gamma(1), delta(1), epsilon(1). F(0) has three main subunits: a(1), b(2) and c(10-14). The alpha and beta chains form an alternating ring which encloses part of the gamma chain. F(1) is attached to F(0) by a central stalk formed by the gamma and epsilon chains, while a peripheral stalk is formed by the delta and b chains.

Its subcellular location is the cell inner membrane. Functionally, f(1)F(0) ATP synthase produces ATP from ADP in the presence of a proton or sodium gradient. F-type ATPases consist of two structural domains, F(1) containing the extramembraneous catalytic core and F(0) containing the membrane proton channel, linked together by a central stalk and a peripheral stalk. During catalysis, ATP synthesis in the catalytic domain of F(1) is coupled via a rotary mechanism of the central stalk subunits to proton translocation. In terms of biological role, this protein is part of the stalk that links CF(0) to CF(1). It either transmits conformational changes from CF(0) to CF(1) or is implicated in proton conduction. The chain is ATP synthase subunit delta from Legionella pneumophila (strain Paris).